The primary structure comprises 299 residues: MFQFGKKITGAHEDGIWCVKWQGDIIATGGMGTKVKTWHGNQPQFLTERKVFDKHILGVTSLDIDIGARYLATGGMDGTVRLFDLSTNTLHKTIDSGPLGCLKIGFLNSANNLVSVSESGNISIYSVETGEKLRSISNTNKQVLTMAISPNNEQIAVAGLDGTVLCYDVESGRRVSEIKAHGVPIRSLCFSSDSKTIFTGAEDSQIRLHDPNSSNPYIASLLGHSSFIFSLVASSNGDLLASSGSIDRKVCIWDIKTRKLDSSFTAHADQTWDLAFSPDSTKLVSVSDDCSIHSYALKQ.

7 WD repeats span residues Ala11–Glu48, Lys54–Thr93, Ser96–Ser135, Asn138–Glu177, Ala180–Ala219, Gly223–Ser263, and Ala266–Gln299.

The protein belongs to the SKI8 family.

The sequence is that of Superkiller complex protein 8 (skic8) from Dictyostelium discoideum (Social amoeba).